The sequence spans 741 residues: G2 and S phase-expressed protein 1 (741 aa).

S73 carries the phosphoserine modification. Disordered stretches follow at residues 101 to 120 (EVAQ…ETFV), 131 to 428 (EKEQ…KTVS), and 450 to 512 (FKVP…STRR). Polar residues predominate over residues 106-120 (ATPQNPVNQGKETFV). Over residues 131–147 (EKEQKRDRSPMSLKRET) the composition is skewed to basic and acidic residues. 4 positions are modified to phosphoserine: S139, S153, S191, and S245. Residues 173–209 (SPVSAGPAQTQSNQGLPCSSQPLPRESSTSQPPSQAG) are compositionally biased toward polar residues. Residues 246–261 (IQRTKLVNEKGSQSDV) show a composition bias toward polar residues. Positions 310 to 321 (SSTSGSASSLES) are enriched in low complexity. S311 carries the post-translational modification Phosphoserine. Residues 337–355 (QRSSIPASGSQRRTSTSKS) are compositionally biased toward polar residues. The span at 360–372 (PAASRQALPAAPA) shows a compositional bias: low complexity. A compositionally biased stretch (polar residues) spans 398 to 408 (SPLTQQPQTPE). S460 carries the phosphoserine modification. T465 bears the Phosphothreonine mark. Phosphoserine occurs at positions 476, 493, 509, and 514. The segment covering 478 to 497 (TPASRVVSSTPVRRSSGTTP) has biased composition (low complexity). Position 518 is a phosphothreonine (T518). Phosphoserine occurs at positions 521, 541, 582, and 599. Positions 550–640 (LSSEPRRRST…VHGGGCSHTP (91 aa)) are disordered. A compositionally biased stretch (low complexity) spans 578 to 593 (QGLSSDESSSPPSSVP). A Phosphothreonine modification is found at T696. S720, S726, and S736 each carry phosphoserine.

Post-translationally, phosphorylated in mitosis.

Its subcellular location is the cytoplasm. It localises to the cytoskeleton. Functionally, may be involved in p53-induced cell cycle arrest in G2/M phase by interfering with microtubule rearrangements that are required to enter mitosis. Overexpression delays G2/M phase progression. The polypeptide is G2 and S phase-expressed protein 1 (Gtse1) (Mus musculus (Mouse)).